A 337-amino-acid polypeptide reads, in one-letter code: Probable dihydroorotase (337 aa).

H12, H14, K95, H132, H170, and D240 together coordinate Zn(2+). The residue at position 95 (K95) is an N6-carboxylysine.

Belongs to the metallo-dependent hydrolases superfamily. DHOase family. Class II DHOase subfamily. The cofactor is Zn(2+).

The enzyme catalyses (S)-dihydroorotate + H2O = N-carbamoyl-L-aspartate + H(+). The protein operates within pyrimidine metabolism; UMP biosynthesis via de novo pathway; (S)-dihydroorotate from bicarbonate: step 3/3. The protein is Probable dihydroorotase (ura2) of Schizosaccharomyces pombe (strain 972 / ATCC 24843) (Fission yeast).